A 398-amino-acid chain; its full sequence is Subtilisin-like protease CPC735_050320 (398 aa).

The N-terminal stretch at 1-19 is a signal peptide; it reads MVFLGKILPLALAALSVNG. The propeptide occupies 20–117; that stretch reads AEILSAPGAE…IERDQIMKAS (98 aa). Residues 35–115 form the Inhibitor I9 domain; the sequence is YIVVMKEGTS…AYIERDQIMK (81 aa). Residues 127–398 enclose the Peptidase S8 domain; it reads SWGLARVSSR…NRLINNGVSQ (272 aa). Active-site charge relay system residues include Asp-159 and His-190. Residues Asn-220 and Asn-250 are each glycosylated (N-linked (GlcNAc...) asparagine). Ser-344 acts as the Charge relay system in catalysis.

It belongs to the peptidase S8 family.

It is found in the secreted. Secreted subtilisin-like serine protease with keratinolytic activity that contributes to pathogenicity. The sequence is that of Subtilisin-like protease CPC735_050320 from Coccidioides posadasii (strain C735) (Valley fever fungus).